The chain runs to 916 residues: Protein translocase subunit SecA (916 aa).

Residues Gln86, 104–108 (GEGKT), and Asp494 contribute to the ATP site. A disordered region spans residues 859–916 (LEAPEKPAQLQYTAPSEGGGTQTRVETRSTGRSGNPAKAAEQDAAKDAAKRPAKKKRR). Residues 880 to 891 (QTRVETRSTGRS) are compositionally biased toward polar residues. Residues 898–908 (AEQDAAKDAAK) are compositionally biased toward basic and acidic residues.

It belongs to the SecA family. As to quaternary structure, monomer and homodimer. Part of the essential Sec protein translocation apparatus which comprises SecA, SecYEG and auxiliary proteins SecDF. Other proteins may also be involved.

It is found in the cell membrane. Its subcellular location is the cytoplasm. It carries out the reaction ATP + H2O + cellular proteinSide 1 = ADP + phosphate + cellular proteinSide 2.. Functionally, part of the Sec protein translocase complex. Interacts with the SecYEG preprotein conducting channel. Has a central role in coupling the hydrolysis of ATP to the transfer of proteins into and across the cell membrane, serving as an ATP-driven molecular motor driving the stepwise translocation of polypeptide chains across the membrane. The chain is Protein translocase subunit SecA from Pseudarthrobacter chlorophenolicus (strain ATCC 700700 / DSM 12829 / CIP 107037 / JCM 12360 / KCTC 9906 / NCIMB 13794 / A6) (Arthrobacter chlorophenolicus).